We begin with the raw amino-acid sequence, 161 residues long: Eukaryotic translation initiation factor 5A-2 (161 aa).

Lys54 carries the post-translational modification Hypusine.

This sequence belongs to the eIF-5A family. Lys-54 undergoes hypusination, a unique post-translational modification that consists in the addition of a butylamino group from spermidine to lysine side chain and leads to the formation of a hypusine residue. eIF-5As are the only known proteins to undergo this modification, which is essential for their function. Expressed in the somatic tissues.

It localises to the cytoplasm. Its function is as follows. Translation factor that promotes translation elongation and termination, particularly upon ribosome stalling at specific amino acid sequence contexts. Binds between the exit (E) and peptidyl (P) site of the ribosome and promotes rescue of stalled ribosome: specifically required for efficient translation of polyproline-containing peptides as well as other motifs that stall the ribosome. Acts as a ribosome quality control (RQC) cofactor by joining the RQC complex to facilitate peptidyl transfer during CAT tailing step. Acts in somatic tissues and its function in the soma is essential for normal growth and reproduction. The polypeptide is Eukaryotic translation initiation factor 5A-2 (iff-2) (Caenorhabditis elegans).